The chain runs to 795 residues: Phenylalanine--tRNA ligase beta subunit (795 aa).

One can recognise a tRNA-binding domain in the interval 39-148 (AGTFNGVKVG…IDAPIGMDFR (110 aa)). The B5 domain maps to 401–476 (PKPNKVALRR…RIYGYDNIPN (76 aa)). Mg(2+)-binding residues include aspartate 454, aspartate 460, glutamate 463, and glutamate 464. An FDX-ACB domain is found at 701 to 794 (SKFPANRRDI…VSEKFGASLR (94 aa)).

The protein belongs to the phenylalanyl-tRNA synthetase beta subunit family. Type 1 subfamily. Tetramer of two alpha and two beta subunits. The cofactor is Mg(2+).

The protein localises to the cytoplasm. The enzyme catalyses tRNA(Phe) + L-phenylalanine + ATP = L-phenylalanyl-tRNA(Phe) + AMP + diphosphate + H(+). The sequence is that of Phenylalanine--tRNA ligase beta subunit from Vibrio vulnificus (strain YJ016).